The following is a 208-amino-acid chain: 3-demethoxyubiquinol 3-hydroxylase (208 aa).

Positions 57, 87, 90, 139, 171, and 174 each coordinate Fe cation.

The protein belongs to the COQ7 family. Requires Fe cation as cofactor.

It localises to the cell membrane. The catalysed reaction is a 5-methoxy-2-methyl-3-(all-trans-polyprenyl)benzene-1,4-diol + AH2 + O2 = a 3-demethylubiquinol + A + H2O. It participates in cofactor biosynthesis; ubiquinone biosynthesis. In terms of biological role, catalyzes the hydroxylation of 2-nonaprenyl-3-methyl-6-methoxy-1,4-benzoquinol during ubiquinone biosynthesis. This Burkholderia mallei (strain NCTC 10229) protein is 3-demethoxyubiquinol 3-hydroxylase.